Reading from the N-terminus, the 116-residue chain is L-amino-acid oxidase BjussuLAAO-II (116 aa).

42–45 (GPMR) provides a ligand contact to FAD. Substrate is bound by residues arginine 45 and histidine 78.

The protein belongs to the flavin monoamine oxidase family. FIG1 subfamily. As to quaternary structure, homodimer; non-covalently linked. Requires FAD as cofactor. In terms of processing, glycosylated. Expressed by the venom gland.

It localises to the secreted. The catalysed reaction is an L-alpha-amino acid + O2 + H2O = a 2-oxocarboxylate + H2O2 + NH4(+). The enzyme catalyses L-leucine + O2 + H2O = 4-methyl-2-oxopentanoate + H2O2 + NH4(+). It carries out the reaction L-phenylalanine + O2 + H2O = 3-phenylpyruvate + H2O2 + NH4(+). It catalyses the reaction L-methionine + O2 + H2O = 4-methylsulfanyl-2-oxobutanoate + H2O2 + NH4(+). The catalysed reaction is L-isoleucine + O2 + H2O = (S)-3-methyl-2-oxopentanoate + H2O2 + NH4(+). The enzyme catalyses L-histidine + O2 + H2O = 3-(imidazol-5-yl)pyruvate + H2O2 + NH4(+). It carries out the reaction L-tyrosine + O2 + H2O = 3-(4-hydroxyphenyl)pyruvate + H2O2 + NH4(+). It catalyses the reaction L-tryptophan + O2 + H2O = indole-3-pyruvate + H2O2 + NH4(+). With respect to regulation, its enzymatic activities is reduced by the presence of Zn(2+), Al(3+), Cu(2+), Na(+) or Ni(2+) salts. Catalyzes an oxidative deamination of predominantly hydrophobic and aromatic L-amino acids, thus producing hydrogen peroxide that may contribute to the diverse toxic effects of this enzyme. Shows very high enzymatic activity on L-Met and L-Leu, high activity on L-Ile, L-Phe and L-Tyr and moderate activity on L-His. Exhibits diverse biological activities, such as hemorrhage, hemolysis, edema, apoptosis of vascular endothelial cells or tumor cell lines, and antibacterial, as well as regulation of platelet aggregation. Effects of snake L-amino oxidases on platelets are controversial, since they either induce aggregation or inhibit agonist-induced aggregation. These different effects are probably due to different experimental conditions. In vitro, has a strong antiprotozoal effect against Leishmania amazonensis (IC(50)=4.56 ug/mL) and Trypanosoma cruzi (IC(50)=4.85 ug/mL). It also causes cell death and DNA damage in hepatocarcinoma cells (HepG2) in vitro by inducing oxidative stress. It exerts cytotoxicity towards colorectal adenocarcinomahuman cells (Caco-2) by acting on multiple intracellular targets. It diminishes cell viability by decreasing mitochondrial activity, the activity of acid phosphatases, and lysosomal function. In addition, it increases intracellular levels of reactive oxygen species and DNA damage, it elevates the expression of the pro-inflammatory cytokine genes TNF and IL6, and lowers the expression of the apoptotic-related genes. Also induces cytotoxicity (IC(50)=1.80 ug/mL) and apoptosis in MCF-7 cells (a human breast adeno-carcinoma cell line) by activating the intrinsic and extrinsic apoptosis pathways, but are not cytotoxic towards MCF-10A cells (a non-tumorigenic human breast epithelial cell line). The chain is L-amino-acid oxidase BjussuLAAO-II from Bothrops jararacussu (Jararacussu).